The sequence spans 814 residues: Leucine--tRNA ligase (814 aa).

Residues 42-52 (PYPSGNLHIGH) carry the 'HIGH' region motif. A 'KMSKS' region motif is present at residues 582-586 (KMSKS). Residue lysine 585 coordinates ATP.

The protein belongs to the class-I aminoacyl-tRNA synthetase family.

It is found in the cytoplasm. It carries out the reaction tRNA(Leu) + L-leucine + ATP = L-leucyl-tRNA(Leu) + AMP + diphosphate. This Herpetosiphon aurantiacus (strain ATCC 23779 / DSM 785 / 114-95) protein is Leucine--tRNA ligase.